We begin with the raw amino-acid sequence, 270 residues long: NAD kinase (270 aa).

Catalysis depends on Asp-62, which acts as the Proton acceptor. NAD(+)-binding positions include 62–63 (DG), Arg-67, 129–130 (ND), Lys-140, Asp-159, Ile-167, 170–175 (TSYSFS), Ala-194, and Gln-227.

It belongs to the NAD kinase family. It depends on a divalent metal cation as a cofactor.

The protein resides in the cytoplasm. It carries out the reaction NAD(+) + ATP = ADP + NADP(+) + H(+). Functionally, involved in the regulation of the intracellular balance of NAD and NADP, and is a key enzyme in the biosynthesis of NADP. Catalyzes specifically the phosphorylation on 2'-hydroxyl of the adenosine moiety of NAD to yield NADP. In Picrophilus torridus (strain ATCC 700027 / DSM 9790 / JCM 10055 / NBRC 100828 / KAW 2/3), this protein is NAD kinase.